Reading from the N-terminus, the 281-residue chain is MEKLKALIEVTKPKQTFLLMITFLVSYIVARGGADFNFVIAAISMFLAISGTTAINMWLDRDIDAIMPRTRKRPVPAGILKPSECAAFGAAIFAIGQVLAFLVSLEFGLVVFFGLFFDIVVYTILLKRKSPYSIVLGGFAGAMPALGGWVAVQGFTLPGFIIAAIVLLWIPSHIWYISMHYEEDYRMANIPMYPLVVGMERASWAIVFATAAMLVLAASLYVLLPLGIFYLVISTSAVAFFLYKAVKFALSPDRVKARKMYKLASMTLGLVYFSLLLGVFL.

The next 9 helical transmembrane spans lie at 16-36 (TFLL…GADF), 38-58 (FVIA…INMW), 75-95 (VPAG…IFAI), 101-121 (FLVS…DIVV), 129-149 (KSPY…LGGW), 150-170 (VAVQ…LLWI), 202-224 (ASWA…YVLL), 228-250 (IFYL…KFAL), and 261-281 (YKLA…GVFL).

This sequence belongs to the UbiA prenyltransferase family. Protoheme IX farnesyltransferase subfamily.

It is found in the cell membrane. The catalysed reaction is heme b + (2E,6E)-farnesyl diphosphate + H2O = Fe(II)-heme o + diphosphate. It participates in porphyrin-containing compound metabolism; heme O biosynthesis; heme O from protoheme: step 1/1. Functionally, converts heme B (protoheme IX) to heme O by substitution of the vinyl group on carbon 2 of heme B porphyrin ring with a hydroxyethyl farnesyl side group. The chain is Protoheme IX farnesyltransferase from Archaeoglobus fulgidus (strain ATCC 49558 / DSM 4304 / JCM 9628 / NBRC 100126 / VC-16).